The following is a 138-amino-acid chain: Acidic phospholipase A2 MVL-PLA2 (138 aa).

An N-terminal signal peptide occupies residues 1 to 16; that stretch reads MRTLWIVAVCLMGVEG. 7 cysteine pairs are disulfide-bonded: C42–C131, C44–C60, C59–C111, C65–C138, C66–C104, C73–C97, and C91–C102. The Ca(2+) site is built by Y43, G45, and G47. H63 is an active-site residue. A Ca(2+)-binding site is contributed by D64. The May inhibit integrin function (Atypical cell attachment site) signature appears at 86 to 88; it reads NGD. D105 is a catalytic residue.

It belongs to the phospholipase A2 family. Group II subfamily. D49 sub-subfamily. Ca(2+) serves as cofactor. As to expression, expressed by the venom gland.

Its subcellular location is the secreted. The catalysed reaction is a 1,2-diacyl-sn-glycero-3-phosphocholine + H2O = a 1-acyl-sn-glycero-3-phosphocholine + a fatty acid + H(+). Functionally, snake venom phospholipase A2 (PLA2) that displays an inhibitory effect, independent from its catalytic activity, on tumor cell adhesion and migration. This effect is mediated via specific inhibition of integrins alpha-5/beta-1 (ITGA5/ITGB1), alpha-v/beta-3 (ITGAV/ITGB3) and alpha-v/beta-6 (ITGAV/ITGB6). PLA2 catalyzes the calcium-dependent hydrolysis of the 2-acyl groups in 3-sn-phosphoglycerides. This is Acidic phospholipase A2 MVL-PLA2 from Macrovipera lebetina transmediterranea (Blunt-nosed viper).